Reading from the N-terminus, the 201-residue chain is Small ribosomal subunit protein uS4c (201 aa).

The region spanning 89 to 149 is the S4 RNA-binding domain; it reads MRLDNILFRL…DKPKSGALIK (61 aa).

The protein belongs to the universal ribosomal protein uS4 family. As to quaternary structure, part of the 30S ribosomal subunit. Contacts protein S5. The interaction surface between S4 and S5 is involved in control of translational fidelity.

The protein localises to the plastid. One of the primary rRNA binding proteins, it binds directly to 16S rRNA where it nucleates assembly of the body of the 30S subunit. In terms of biological role, with S5 and S12 plays an important role in translational accuracy. This Cuscuta reflexa (Southern Asian dodder) protein is Small ribosomal subunit protein uS4c (rps4).